We begin with the raw amino-acid sequence, 360 residues long: Phospho-N-acetylmuramoyl-pentapeptide-transferase (360 aa).

Helical transmembrane passes span 26 to 46, 73 to 93, 98 to 118, 136 to 156, 168 to 188, 199 to 219, 235 to 255, 263 to 283, 288 to 308, and 338 to 358; these read TILG…AVIQ, TMGG…WADL, VWVV…DDAL, LQVL…TDPV, WVFP…VGSS, GLAI…AYAS, GVGE…GFLW, VFMG…VAVA, IVLF…MIQV, and VIVR…AMLK.

Belongs to the glycosyltransferase 4 family. MraY subfamily. It depends on Mg(2+) as a cofactor.

It localises to the cell inner membrane. The catalysed reaction is UDP-N-acetyl-alpha-D-muramoyl-L-alanyl-gamma-D-glutamyl-meso-2,6-diaminopimeloyl-D-alanyl-D-alanine + di-trans,octa-cis-undecaprenyl phosphate = di-trans,octa-cis-undecaprenyl diphospho-N-acetyl-alpha-D-muramoyl-L-alanyl-D-glutamyl-meso-2,6-diaminopimeloyl-D-alanyl-D-alanine + UMP. Its pathway is cell wall biogenesis; peptidoglycan biosynthesis. Catalyzes the initial step of the lipid cycle reactions in the biosynthesis of the cell wall peptidoglycan: transfers peptidoglycan precursor phospho-MurNAc-pentapeptide from UDP-MurNAc-pentapeptide onto the lipid carrier undecaprenyl phosphate, yielding undecaprenyl-pyrophosphoryl-MurNAc-pentapeptide, known as lipid I. The protein is Phospho-N-acetylmuramoyl-pentapeptide-transferase of Halorhodospira halophila (strain DSM 244 / SL1) (Ectothiorhodospira halophila (strain DSM 244 / SL1)).